We begin with the raw amino-acid sequence, 433 residues long: Myricetin 3-O-glucosyl 1,2-rhamnoside 6'-O-caffeoyltransferase AT1 (433 aa).

Catalysis depends on proton acceptor residues His-157 and Asp-375.

This sequence belongs to the plant acyltransferase family. Expressed in young cromes.

The catalysed reaction is myricetin 3-O-[beta-D-glucosyl-(1-&gt;2)-alpha-L-rhamnoside] + (E)-caffeoyl-CoA = myricetin 3-O-[(6-O-(E)-caffeoyl-beta-D-glucosyl)-(1-&gt;2)-alpha-L-rhamnoside] + CoA. Its pathway is flavonoid metabolism. Caffeoyltransferase involved in montbretin A (MbA) biosynthesis. Catalyzes the caffeoylation of myricetin 3-O-beta-D-glucosyl 1,2-alpha-L-rhamnoside (MRG) to produce myricetin 3-O-(6'-O-caffeoyl)-beta-D-glucosyl 1,2-alpha-L-rhamnoside (mini-MbA), a precursor of MbA. Mini-MbA and MbA are potent inhibitors of human pancreatic alpha-amylase and are being developed as drug candidates to treat type-2 diabetes. In vitro, is able to catalyze the caffeoylation of quercetin 3-O-sophoroside (QGG), although QGG may not be a physiological substrate in vivo. In vitro, can use coumaryl-CoA, feruloyl-CoA and acetyl-CoA, although these three acyl donors may not be physiological in vivo. The chain is Myricetin 3-O-glucosyl 1,2-rhamnoside 6'-O-caffeoyltransferase AT1 from Crocosmia x crocosmiiflora (Montbretia).